A 500-amino-acid polypeptide reads, in one-letter code: Lysine--tRNA ligase (500 aa).

Mg(2+) is bound by residues E411 and E418.

Belongs to the class-II aminoacyl-tRNA synthetase family. In terms of assembly, homodimer. Mg(2+) is required as a cofactor.

Its subcellular location is the cytoplasm. The catalysed reaction is tRNA(Lys) + L-lysine + ATP = L-lysyl-tRNA(Lys) + AMP + diphosphate. In Actinobacillus pleuropneumoniae serotype 5b (strain L20), this protein is Lysine--tRNA ligase.